Consider the following 1285-residue polypeptide: Transmembrane channel-like protein 1 (1285 aa).

Residues 1-29 (MQEAARRASLRKEHTPTNEKFGDLSKQDS) form a disordered region. Topologically, residues 1 to 164 (MQEAARRASL…KIKRIESHFG (164 aa)) are cytoplasmic. The chain crosses the membrane as a helical span at residues 165 to 202 (SVVSSYFTFLRWIVFVNIMITLIALVFVVLPETLADSV). The Extracellular portion of the chain corresponds to 203–260 (ANEGRFNRTKTRKQIPANERVHADELAVVWHYDGYLRYSPLFYGYYSDDPFLGNKIKY). N-linked (GalNAc...) asparagine glycosylation occurs at N209. A helical transmembrane segment spans residues 261–292 (ALPLAYFMVTLTIFAYSFFAILRKMAANARMS). Topologically, residues 293 to 349 (KLSGSKAEQYIFNWKLFTGWDYTIGNSETASNTVMAVVIKLRESIADIKKDAHGKFR) are cytoplasmic. A helical membrane pass occupies residues 350–381 (LLQFSLRVFANIIICAMLGFSIYCIIFAVQKS). At 382-388 (QVQDDGN) the chain is on the extracellular side. Residues 389 to 416 (LFTKNQVPSVVSTITHVFPMIFDLIGKM) traverse the membrane as a helical segment. Residues 417 to 420 (ENYH) lie on the Cytoplasmic side of the membrane. The chain crosses the membrane as a helical span at residues 421-455 (PRTALRAHLGRVLILYTVNYITLIFALFEKMTALR). Topologically, residues 456-667 (DRVNSTSTSS…NHDGHNNDIC (212 aa)) are extracellular. Residues 458 to 488 (VNSTSTSSSHRTKRQQGGWNPNMQRPPPYAS) form a disordered region. Cysteines 667 and 816 form a disulfide. Residues 668 to 705 (WETIIGQEIVKLVTMDLIFTILSILVIDLFRGLWIKYC) form a helical membrane-spanning segment. Positions 696–720 (LFRGLWIKYCSSWWCWDIETTFPEY) are required for interaction with tmie. Residues 706–724 (SSWWCWDIETTFPEYGEFK) lie on the Cytoplasmic side of the membrane. A helical membrane pass occupies residues 725–745 (VAENVLHIINNQGMIWLGLFF). Over 746–748 (APL) the chain is Extracellular. A helical transmembrane segment spans residues 749–771 (LPAINNIKLIILMYIRGWAVMTC). Residues 766-773 (WAVMTCNV) are required for interaction with tmie. Over 772 to 785 (NVPAREIFRASRSS) the chain is Cytoplasmic. Residues 786-809 (NFYLGILLIWLLLCTLPVGFVIAS) form a helical membrane-spanning segment. Residues 810-852 (MSPSRSCGPFARYQHFYTVVTREIEKRVDQTVLSYIRHIASPG) are Extracellular-facing. A helical membrane pass occupies residues 853-886 (VVIPIILFLILIIYFLFSLVRGLREANTDLQAQL). Topologically, residues 887 to 1285 (VHERTEEKKK…DEDDSPRQID (399 aa)) are cytoplasmic. 2 disordered regions span residues 940-962 (ADHALASDSSEESDINEDEDDER) and 1114-1285 (TIKE…RQID). A compositionally biased stretch (acidic residues) spans 948–961 (SSEESDINEDEDDE). 3 stretches are compositionally biased toward basic and acidic residues: residues 1121–1131 (DPGKSDKKQTS), 1146–1156 (DEARALREKMK), and 1167–1182 (TVEEKPKGGKSSESEF). The span at 1197–1208 (TEEENEEEETDS) shows a compositional bias: acidic residues.

The protein belongs to the TMC family. Homodimer. Interacts with calm-1 and tmie to form the MET channel. In terms of tissue distribution, expressed in the ASH polymodal avoidance neurons. Also expressed in other sensory neurons, including the ADF, ASE, ADL, AQR, PQR, URX and PHA cells.

It is found in the cell membrane. It catalyses the reaction Na(+)(in) = Na(+)(out). The catalysed reaction is Ca(2+)(in) = Ca(2+)(out). It carries out the reaction K(+)(in) = K(+)(out). In terms of biological role, pore-forming subunit of the mechanotransducer (MET) non-selective cation channel complex. The MET complex is composed of symmetric dimeric MET channels, each channel comprising two copies of pore-forming ion-conducting transmembrane TMC subunits and auxiliary proteins including the transmembrane inner ear protein/tmie, the calcium-binding protein/calm-1 and arrestin domain protein arrd-6. Sodium ions are the most permeable, whereas calcium and potassium have lower indices. Sodium-sensor ion channel that acts specifically in salt taste chemosensation. Required for salt-evoked neuronal activity and behavioral avoidance of high concentrations of NaCl. This chain is Transmembrane channel-like protein 1 (tmc-1), found in Caenorhabditis elegans.